The sequence spans 284 residues: Tetraspanin-10 (284 aa).

The Cytoplasmic segment spans residues 1 to 11 (MGMGTSTFVIR). Residues 12 to 32 (WVNLLTMLLAVAVIIFGVWMS) traverse the membrane as a helical segment. Residues 33 to 43 (THNDGCRRSLT) are Extracellular-facing. A helical transmembrane segment spans residues 44-64 (FPVIALGGFIFLISIIGFLGA). At 65–75 (CKRSVALLWIY) the chain is on the cytoplasmic side. The chain crosses the membrane as a helical span at residues 76–96 (LAVLLIVLIAILVFTVLAFIV). The Extracellular portion of the chain corresponds to 97 to 228 (TNNGSGHTNP…AGVAQYMKTE (132 aa)). 3 N-linked (GlcNAc...) asparagine glycosylation sites follow: asparagine 99, asparagine 128, and asparagine 183. The chain crosses the membrane as a helical span at residues 229–249 (WRLVAIFNVVLFVVLISSLLS). Residues 250-284 (TRFDSEQSFGLLNGLVQISNITFKDCQTTTVPKQF) are Cytoplasmic-facing.

It belongs to the tetraspanin (TM4SF) family.

It localises to the membrane. In terms of biological role, may be involved in the regulation of cell differentiation. The polypeptide is Tetraspanin-10 (TET10) (Arabidopsis thaliana (Mouse-ear cress)).